Here is a 101-residue protein sequence, read N- to C-terminus: Small ribosomal subunit protein uS14 (101 aa).

The protein belongs to the universal ribosomal protein uS14 family. As to quaternary structure, part of the 30S ribosomal subunit. Contacts proteins S3 and S10.

In terms of biological role, binds 16S rRNA, required for the assembly of 30S particles and may also be responsible for determining the conformation of the 16S rRNA at the A site. The protein is Small ribosomal subunit protein uS14 of Acinetobacter baylyi (strain ATCC 33305 / BD413 / ADP1).